The chain runs to 132 residues: CLAVATA3/ESR (CLE)-related protein 2-B (132 aa).

An N-terminal signal peptide occupies residues 1 to 26 (MASRMGMVAILSLFVCALVASTSVNA). The disordered stretch occupies residues 68–132 (NRASKQLDRE…IGPPPFLDRY (65 aa)). Hydroxyproline occurs at positions 82 and 85. A glycan (O-linked (Ara...) hydroxyproline) is linked at Pro-85.

Belongs to the CLV3/ESR signal peptide family. In terms of processing, the O-glycosylation (arabinosylation) of the hydroxyproline Pro-85 enhances binding affinity of the ESR2Bp peptide for its receptor. As to expression, seed endosperm.

The protein localises to the secreted. Its subcellular location is the extracellular space. Extracellular signal peptide that regulates cell fate. This Zea mays (Maize) protein is CLAVATA3/ESR (CLE)-related protein 2-B.